Here is a 156-residue protein sequence, read N- to C-terminus: Ribosomal RNA large subunit methyltransferase H (156 aa).

S-adenosyl-L-methionine-binding positions include leucine 73, glycine 104, and 123–128 (LSSLTL).

The protein belongs to the RNA methyltransferase RlmH family. In terms of assembly, homodimer.

Its subcellular location is the cytoplasm. It carries out the reaction pseudouridine(1915) in 23S rRNA + S-adenosyl-L-methionine = N(3)-methylpseudouridine(1915) in 23S rRNA + S-adenosyl-L-homocysteine + H(+). Specifically methylates the pseudouridine at position 1915 (m3Psi1915) in 23S rRNA. This is Ribosomal RNA large subunit methyltransferase H from Bordetella petrii (strain ATCC BAA-461 / DSM 12804 / CCUG 43448).